Here is a 630-residue protein sequence, read N- to C-terminus: Neuronal acetylcholine receptor subunit alpha-4 (630 aa).

Residues 1–30 form the signal peptide; that stretch reads MANSGTGAPPPLLLLPLLLLLGTGLLPASS. Over 32–249 the chain is Extracellular; it reads IETRAHAEER…IIRRLPLFYT (218 aa). N-linked (GlcNAc...) asparagine glycosylation is present at Asn-59. Ca(2+)-binding residues include Val-78 and Glu-80. N-linked (GlcNAc...) asparagine glycosylation is found at Asn-109 and Asn-176. Intrachain disulfides connect Cys-163/Cys-177 and Cys-227/Cys-228. Residues 250–270 traverse the membrane as a helical segment; the sequence is INLIIPCLLISCLTVLVFYLP. Residue Cys-273 is the site of S-palmitoyl cysteine attachment. The next 2 membrane-spanning stretches (helical) occupy residues 279–299 and 313–333; these read LCIS…EIIP and LLFT…VLNV. Over 334–604 the chain is Cytoplasmic; the sequence is HHRSPRTHTM…WKYVAMVIDR (271 aa). Disordered regions lie at residues 418 to 463 and 505 to 526; these read TAVE…SGAP and SLAD…SQLP. Ser-428 is modified (phosphoserine). Basic and acidic residues predominate over residues 434–443; the sequence is PDLKTSEVEK. Pro residues predominate over residues 447–457; that stretch reads CPSPGSCPPPK. A phosphoserine mark is found at Ser-542 and Ser-545. A helical membrane pass occupies residues 605–625; it reads IFLWMFIIVCLLGTVGLFLPP.

Belongs to the ligand-gated ion channel (TC 1.A.9) family. Acetylcholine receptor (TC 1.A.9.1) subfamily. Alpha-4/CHRNA4 sub-subfamily. As to quaternary structure, neuronal AChR is composed of two different types of subunits: alpha and beta. CHRNA4 forms heteropentameric neuronal acetylcholine receptors with CHRNB2 and CHRNB4, as well as CHRNA5 and CHRNB3 as accesory subunits. Found in two major stoichiometric forms, LS (low agonist sensitivity): (CHRNA4)3:(CHRNB2)2 and HS (high agonist sensitivity): (CHRNA4)2:(CHRNB2)3, the two stoichiometric forms differ in their unitary conductance, calcium permeability, ACh sensitivity and potentiation by divalent cation. Cells produce predominantly an (CHRNA4)3:(CHRNB2)2 nAChR. The (CHRNA4)2:(CHRNB2)3 expression is selectively up-regulated by nicotine and has lower single channel conductance and calcium permeability. In the striatum, also forms CHRNA4:CHRNA6:CHRNB2 complexes. Also found in the stoichiometric form: (CHRNA4:CHRNB2)2:CHRNB3. Interacts with RIC3; which is required for proper folding and assembly. Interacts with LYPD6. In terms of tissue distribution, in various regions of the central nervous system. Expressed in hippocampal neurons.

The protein resides in the presynaptic cell membrane. The protein localises to the cell membrane. It catalyses the reaction Ca(2+)(in) = Ca(2+)(out). The catalysed reaction is K(+)(in) = K(+)(out). It carries out the reaction Na(+)(in) = Na(+)(out). With respect to regulation, activated by a myriad of ligands such as acetylcholine, cytisine, nicotine, choline and epibatidine. Channel potentiation by calcium is stoichiometry-selective, CHRNA4:CHRNB2 nACh receptor is achieved by calcium association with topographically distinct sites framed by anionic residues within the CHRNA4 subunit and between the CHRNA4 and CHRNB2 subunits. nAChR activity is inhibited by the antagonist alpha-conotoxins BuIA, PnIA, GID and MII, small disulfide-constrained peptides from cone snails. Component of neuronal acetylcholine receptors (nAChRs) that function as pentameric, ligand-gated cation channels with high calcium permeability among other activities. nAChRs are excitatory neurotrasnmitter receptors formed by a collection of nAChR subunits known to mediate synaptic transmission in the nervous system and the neuromuscular junction. Each nAchR subunit confers differential attributes to channel properties, including activation, deactivation and desensitization kinetics, pH sensitivity, cation permeability, and binding to allosteric modulators. CHRNA4 forms heteropentameric neuronal acetylcholine receptors with CHRNB2 and CHRNB4, as well as CHRNA5 and CHRNB3 as accesory subunits. Is the most abundant nAChR subtype expressed in the central nervous system. Found in two major stoichiometric forms,(CHRNA4)3:(CHRNB2)2 and (CHRNA4)2:(CHRNB2)3, the two stoichiometric forms differ in their unitary conductance, calcium permeability, ACh sensitivity and potentiation by divalent cation. Involved in the modulation of calcium-dependent signaling pathways, influences the release of neurotransmitters, including dopamine, glutamate and GABA. The protein is Neuronal acetylcholine receptor subunit alpha-4 (Chrna4) of Rattus norvegicus (Rat).